The sequence spans 188 residues: COMM domain-containing protein 1 (188 aa).

Residues 1–122 (MAGDLEGGKS…RWDNGLRGLS (122 aa)) are sufficient for interaction with SLC12A2. Residues His-100, Met-109, and His-133 each contribute to the Cu cation site. A COMM domain is found at 117-185 (GLRGLSWRVD…EVEESINRLM (69 aa)). A required for binding to PtdIns(4,5)P2 region spans residues 124 to 188 (RVDGKSQSRH…ESINRLMQAA (65 aa)).

It belongs to the COMM domain-containing protein 1 family. In terms of assembly, component of the commander complex consisting of the CCC subcomplex and the retriever subcomplex. Component of the CCC (COMMD/CCDC22/CCDC93) subcomplex consisting of COMMD1, COMMD2, COMMD3, COMMD4, COMMD5, COMMD6, COMMD7, COMMD8, COMMD9, COMMD10, CCDC22 and CCDC93; within the complex forms a heterodimer with COMMD6. Interacts with VPS35L; the interaction associates the CCC complex with the retriever complex. Identified in a complex with an E3 ubiquitin ligase complex composed of TCEB1/elongin C, CUL2, SOCS1 and RBX1; in the complex interacts directly with SOCS1 and CUL2. Identified in a complex with NF-kappa-B. Interacts directly with SLC12A2. Interacts directly with ATP7B (via the N-terminal region). Interacts with ATP7A. Interacts with FAM107A; this interaction stabilizes COMMD1 in the nucleus. Interacts with CCS, CDKN2A, RELA, REL, RELB, NFKB1/p105, NFKB2/p100, NFKBIB, SCNN1D, SCNN1B, CFTR, CLU, SGK1, AKT1, CUL1, CUL2, CUL3, CUL4A, CUL4B, CUL5, CUL7, HIF1A. Post-translationally, ubiquitinated; undergoes both 'Lys-63'- and 'Lys-48'-linked polyubiquitination. Ubiquitinated by XIAP, leading to its proteasomal degradation.

It is found in the nucleus. Its subcellular location is the cytoplasm. It localises to the endosome membrane. The protein resides in the cytoplasmic vesicle. The protein localises to the early endosome. It is found in the recycling endosome. Scaffold protein in the commander complex that is essential for endosomal recycling of transmembrane cargos; the commander complex is composed of the CCC subcomplex and the retriever subcomplex. Can modulate activity of cullin-RING E3 ubiquitin ligase (CRL) complexes by displacing CAND1; in vitro promotes CRL E3 activity and dissociates CAND1 from CUL1 and CUL2. Promotes ubiquitination of NF-kappa-B subunit RELA and its subsequent proteasomal degradation. Down-regulates NF-kappa-B activity. Involved in the regulation of membrane expression and ubiquitination of SLC12A2. Modulates Na(+) transport in epithelial cells by regulation of apical cell surface expression of amiloride-sensitive sodium channel (ENaC) subunits and by promoting their ubiquitination presumably involving NEDD4L. Promotes the localization of SCNN1D to recycling endosomes. Promotes CFTR cell surface expression through regulation of its ubiquitination. Down-regulates SOD1 activity by interfering with its homodimerization. Plays a role in copper ion homeostasis. Involved in copper-dependent ATP7A trafficking between the trans-Golgi network and vesicles in the cell periphery; the function is proposed to depend on its association within the CCC complex and cooperation with the WASH complex on early endosomes. Can bind one copper ion per monomer. May function to facilitate biliary copper excretion within hepatocytes. Binds to phosphatidylinositol 4,5-bisphosphate (PtdIns(4,5)P2). Involved in the regulation of HIF1A-mediated transcription; competes with ARNT/Hif-1-beta for binding to HIF1A resulting in decreased DNA binding and impaired transcriptional activation by HIF-1. Negatively regulates neuroblastoma G1/S phase cell cycle progression and cell proliferation by stimulating ubiquitination of NF-kappa-B subunit RELA and NF-kappa-B degradation in a FAM107A- and actin-dependent manner. This Mus musculus (Mouse) protein is COMM domain-containing protein 1 (Commd1).